We begin with the raw amino-acid sequence, 609 residues long: Membrane protein insertase YidC (609 aa).

The next 5 membrane-spanning stretches (helical) occupy residues 8-28, 381-401, 451-471, 509-529, and 545-565; these read LILA…LFPP, MGWS…PLAL, LPIL…FVTI, SLTA…SMWL, and IFAW…SGLV.

This sequence belongs to the OXA1/ALB3/YidC family. Type 1 subfamily. In terms of assembly, interacts with the Sec translocase complex via SecD. Specifically interacts with transmembrane segments of nascent integral membrane proteins during membrane integration.

Its subcellular location is the cell inner membrane. In terms of biological role, required for the insertion and/or proper folding and/or complex formation of integral membrane proteins into the membrane. Involved in integration of membrane proteins that insert both dependently and independently of the Sec translocase complex, as well as at least some lipoproteins. Aids folding of multispanning membrane proteins. This is Membrane protein insertase YidC from Ruegeria pomeroyi (strain ATCC 700808 / DSM 15171 / DSS-3) (Silicibacter pomeroyi).